Reading from the N-terminus, the 95-residue chain is Co-chaperonin GroES (95 aa).

Belongs to the GroES chaperonin family. Heptamer of 7 subunits arranged in a ring. Interacts with the chaperonin GroEL.

The protein localises to the cytoplasm. Functionally, together with the chaperonin GroEL, plays an essential role in assisting protein folding. The GroEL-GroES system forms a nano-cage that allows encapsulation of the non-native substrate proteins and provides a physical environment optimized to promote and accelerate protein folding. GroES binds to the apical surface of the GroEL ring, thereby capping the opening of the GroEL channel. This Rickettsia akari (strain Hartford) protein is Co-chaperonin GroES.